The sequence spans 70 residues: Small ribosomal subunit protein bS21 (70 aa).

This sequence belongs to the bacterial ribosomal protein bS21 family.

The polypeptide is Small ribosomal subunit protein bS21 (Campylobacter fetus subsp. fetus (strain 82-40)).